The primary structure comprises 118 residues: Ribosome-binding factor A (118 aa).

This sequence belongs to the RbfA family. In terms of assembly, monomer. Binds 30S ribosomal subunits, but not 50S ribosomal subunits or 70S ribosomes.

It localises to the cytoplasm. In terms of biological role, one of several proteins that assist in the late maturation steps of the functional core of the 30S ribosomal subunit. Associates with free 30S ribosomal subunits (but not with 30S subunits that are part of 70S ribosomes or polysomes). Required for efficient processing of 16S rRNA. May interact with the 5'-terminal helix region of 16S rRNA. In Dehalococcoides mccartyi (strain ATCC BAA-2100 / JCM 16839 / KCTC 5957 / BAV1), this protein is Ribosome-binding factor A.